A 181-amino-acid polypeptide reads, in one-letter code: Monofunctional chorismate mutase (181 aa).

The N-terminal stretch at 1 to 20 (MIRHIAIFLCSLLMCSTTFA) is a signal peptide. A Chorismate mutase domain is found at 21-102 (DSVTSVSLGA…ASKAIQYRYL (82 aa)). The substrate site is built by Arg-38, Lys-49, Asp-58, Glu-62, and Gln-98.

Its subcellular location is the periplasm. It catalyses the reaction chorismate = prephenate. It participates in metabolic intermediate biosynthesis; prephenate biosynthesis; prephenate from chorismate: step 1/1. In terms of biological role, catalyzes the Claisen rearrangement of chorismate to prephenate. The sequence is that of Monofunctional chorismate mutase from Salmonella typhimurium.